Consider the following 75-residue polypeptide: Transaldolase (75 aa).

This sequence belongs to the transaldolase family. Type 1 subfamily. In terms of assembly, homodimer. Phosphorylated. In terms of tissue distribution, predominantly expressed in Y-organs.

It is found in the cytoplasm. It carries out the reaction D-sedoheptulose 7-phosphate + D-glyceraldehyde 3-phosphate = D-erythrose 4-phosphate + beta-D-fructose 6-phosphate. The protein operates within carbohydrate degradation; pentose phosphate pathway; D-glyceraldehyde 3-phosphate and beta-D-fructose 6-phosphate from D-ribose 5-phosphate and D-xylulose 5-phosphate (non-oxidative stage): step 2/3. Transaldolase is important for the balance of metabolites in the pentose-phosphate pathway. May play a role in the conversion of sterols into ecdysteroids via NADPH. This chain is Transaldolase, found in Carcinus maenas (Common shore crab).